A 306-amino-acid chain; its full sequence is Aquaporin-1 (306 aa).

Residues 1–23 (MASTHSSLTTVQNNANNKSNRTL) are compositionally biased toward polar residues. Positions 1–24 (MASTHSSLTTVQNNANNKSNRTLN) are disordered. Residues 1–59 (MASTHSSLTTVQNNANNKSNRTLNTERRLSMESSVFTLYNKAADELDTSQRSAFQACHR) are Cytoplasmic-facing. Residues 60 to 80 (EFLAEFIGTVILVLLTCGFCA) form a helical membrane-spanning segment. At 81-92 (EQTLHIEESKSW) the chain is on the extracellular side. Residues 93–113 (LTSSFGSGLSVLIGICVSGHV) traverse the membrane as a helical segment. Residues 114–145 (SGAHLNPAVTIAFCIFSGFPIRKVPSYITAQL) lie on the Cytoplasmic side of the membrane. An NPA 1 motif is present at residues 119–121 (NPA). The helical transmembrane segment at 146-166 (LGAFAGAALLYIIIEPAIVQF) threads the bilayer. Topologically, residues 167-192 (DGGQRYILGEKSTAGIFGTYPPLYVG) are extracellular. Residues 193 to 213 (IGSAIASEIMGTAMLLLVIMV) traverse the membrane as a helical segment. At 214–226 (TGHPNNLPYKSAQ) the chain is on the cytoplasmic side. The chain crosses the membrane as a helical span at residues 227–247 (GAMIALGITTISLCIGYTSGF). Topologically, residues 248–278 (SLNPARDFGPRLFTAIAGWGFDVFKVYHYYA) are extracellular. An NPA 2 motif is present at residues 250-252 (NPA). The helical transmembrane segment at 279 to 299 (LVPMFAPILGGLVGLMLMMPF) threads the bilayer. At 300 to 306 (SFLSVRA) the chain is on the cytoplasmic side.

Belongs to the MIP/aquaporin (TC 1.A.8) family.

It localises to the cell membrane. It catalyses the reaction H2O(in) = H2O(out). Its function is as follows. Water channel required to facilitate the transport of water across membranes. Contributes to water uptake of spores during the early stages of spore germination. Aquaporins AQP1 and AQP2 act as extracellular pH sensors and enable the spores to hydrate under favorable conditions and to commence germination. Wounded vegetables and fruit present acidic pH, so the optimal pH range for germination is adapted to the relevant host pH. This chain is Aquaporin-1, found in Rhizopus delemar (strain RA 99-880 / ATCC MYA-4621 / FGSC 9543 / NRRL 43880) (Mucormycosis agent).